Reading from the N-terminus, the 239-residue chain is BURP domain-containing protein 6 (239 aa).

The N-terminal stretch at 1 to 19 (MPGAIRDLINPVSSAASAS) is a signal peptide. In terms of domain architecture, BURP spans 28-239 (FFLEKDLFPG…PQDDMLWVRN (212 aa)).

In terms of tissue distribution, expressed in leaves and shoot.

This chain is BURP domain-containing protein 6 (BURP6), found in Oryza sativa subsp. japonica (Rice).